A 205-amino-acid polypeptide reads, in one-letter code: uncharacterized protein (205 aa).

This is an uncharacterized protein from Orgyia pseudotsugata (Douglas-fir tussock moth).